The chain runs to 947 residues: Serine-aspartate repeat-containing protein C (947 aa).

The N-terminal stretch at 1-50 (MNNKKTATNRKGMIPNRLNKFSIRKYSVGTASILVGTTLIFGLSGHEAKA) is a signal peptide. The short motif at 21 to 32 (FSIRKYSVGTAS) is the YSIRK-G/S signaling motif element. Residues 51-164 (AEHTNGELNQ…STTPKTTTIK (114 aa)) form a disordered region. The interval 51–495 (AEHTNGELNQ…GSSTANGDQK (445 aa)) is ligand binding A region. Residues 56 to 71 (GELNQSKNETTAPSEN) show a composition bias toward polar residues. Residues 72–83 (KTTKKVDSRQLK) show a composition bias toward basic and acidic residues. The segment covering 84 to 155 (DNTQTATADQ…SNLTQAKDVS (72 aa)) has biased composition (polar residues). CNA-B domains follow at residues 496–606 (KYNL…YKTP) and 607–717 (KYSL…EEET). The interval 678–927 (TQTGTNTTED…NNSNNGTLFG (250 aa)) is disordered. Acidic residues-rich tracts occupy residues 685 to 695 (TEDDKDADGGE) and 712 to 886 (YYEE…DSDS). Residues 910–914 (LPETG) carry the LPXTG sorting signal motif. Low complexity predominate over residues 912–927 (ETGSENNNSNNGTLFG). Thr-913 carries the pentaglycyl murein peptidoglycan amidated threonine modification. Residues 914–947 (GSENNNSNNGTLFGGLFAALGSLLLFGRRKKQNK) constitute a propeptide, removed by sortase.

This sequence belongs to the serine-aspartate repeat-containing protein (SDr) family. As to quaternary structure, homodimerizes; via N2-Domain. Interacts with host NRXN1; this interaction mediates bacterial attachment to host cells.

It is found in the secreted. The protein localises to the cell wall. Its function is as follows. Cell surface-associated calcium-binding protein which plays an important role in adhesion and pathogenesis. Mediates interactions with components of the extracellular matrix such as host NRXN1 to promote bacterial adhesion. The chain is Serine-aspartate repeat-containing protein C (sdrC) from Staphylococcus aureus (strain Newman).